The following is a 112-amino-acid chain: uncharacterized protein (112 aa).

The interval 91–112 (ENQRKKGTRKRRSSEVDSKEKS) is disordered. Positions 103–112 (SSEVDSKEKS) are enriched in basic and acidic residues.

This is an uncharacterized protein from Caenorhabditis elegans.